The primary structure comprises 309 residues: Probable MRF1 mitochondrial N(5)-glutamine methyltransferase mtq1 (309 aa).

Residues Cys124–Gly128, Asp148, and Asn200 each bind S-adenosyl-L-methionine. Asn200–Tyr203 is a substrate binding site.

It belongs to the protein N5-glutamine methyltransferase family.

Its subcellular location is the mitochondrion. The catalysed reaction is L-glutaminyl-[peptide chain release factor] + S-adenosyl-L-methionine = N(5)-methyl-L-glutaminyl-[peptide chain release factor] + S-adenosyl-L-homocysteine + H(+). Methylates MRF1 on 'Gln-270' using S-adenosyl L-methionine as methyl donor. This Schizosaccharomyces pombe (strain 972 / ATCC 24843) (Fission yeast) protein is Probable MRF1 mitochondrial N(5)-glutamine methyltransferase mtq1 (mtq1).